The primary structure comprises 446 residues: Probable glycine dehydrogenase (decarboxylating) subunit 1 (446 aa).

The protein belongs to the GcvP family. N-terminal subunit subfamily. In terms of assembly, the glycine cleavage system is composed of four proteins: P, T, L and H. In this organism, the P 'protein' is a heterodimer of two subunits.

The enzyme catalyses N(6)-[(R)-lipoyl]-L-lysyl-[glycine-cleavage complex H protein] + glycine + H(+) = N(6)-[(R)-S(8)-aminomethyldihydrolipoyl]-L-lysyl-[glycine-cleavage complex H protein] + CO2. Functionally, the glycine cleavage system catalyzes the degradation of glycine. The P protein binds the alpha-amino group of glycine through its pyridoxal phosphate cofactor; CO(2) is released and the remaining methylamine moiety is then transferred to the lipoamide cofactor of the H protein. The polypeptide is Probable glycine dehydrogenase (decarboxylating) subunit 1 (Protochlamydia amoebophila (strain UWE25)).